Here is a 328-residue protein sequence, read N- to C-terminus: tRNA dimethylallyltransferase (328 aa).

An ATP-binding site is contributed by G23 to S30. T25–S30 contacts substrate. An interaction with substrate tRNA region spans residues D48–Q51.

It belongs to the IPP transferase family. Monomer. Requires Mg(2+) as cofactor.

The enzyme catalyses adenosine(37) in tRNA + dimethylallyl diphosphate = N(6)-dimethylallyladenosine(37) in tRNA + diphosphate. Catalyzes the transfer of a dimethylallyl group onto the adenine at position 37 in tRNAs that read codons beginning with uridine, leading to the formation of N6-(dimethylallyl)adenosine (i(6)A). The sequence is that of tRNA dimethylallyltransferase from Rhodopseudomonas palustris (strain BisA53).